A 268-amino-acid polypeptide reads, in one-letter code: Trans-aconitate 2-methyltransferase (268 aa).

This sequence belongs to the methyltransferase superfamily. Tam family.

It localises to the cytoplasm. The catalysed reaction is trans-aconitate + S-adenosyl-L-methionine = (E)-3-(methoxycarbonyl)pent-2-enedioate + S-adenosyl-L-homocysteine. Catalyzes the S-adenosylmethionine monomethyl esterification of trans-aconitate. In Delftia acidovorans (strain DSM 14801 / SPH-1), this protein is Trans-aconitate 2-methyltransferase.